The following is a 652-amino-acid chain: Chaperone protein HtpG (652 aa).

Residues 1 to 351 form an a; substrate-binding region; that stretch reads MTEHVEQLEF…AQDLSLNVSR (351 aa). The b stretch occupies residues 352 to 568; sequence EILQQDRQIQ…VFDFTPMLER (217 aa). Residues 569 to 652 are c; the sequence is MYRASGQPVP…ILTDRLTRTL (84 aa).

The protein belongs to the heat shock protein 90 family. In terms of assembly, homodimer.

It localises to the cytoplasm. In terms of biological role, molecular chaperone. Has ATPase activity. This is Chaperone protein HtpG from Nocardia farcinica (strain IFM 10152).